The sequence spans 111 residues: MIWLTLVFASLLSVAGQLCQKQATCFVAINKRRKHIALWLGLALACLGLAMVLWLLVLQNVPVGIAYPMLSLNFVWVTLAAVKLWHEPVSPRHWCGVAFIIGGIVILGSTV.

At 1–37 the chain is on the cytoplasmic side; that stretch reads MIWLTLVFASLLSVAGQLCQKQATCFVAINKRRKHIA. A helical transmembrane segment spans residues 38–58; the sequence is LWLGLALACLGLAMVLWLLVL. An EamA domain is found at 40–109; that stretch reads LGLALACLGL…IIGGIVILGS (70 aa). Residues 59–60 are Periplasmic-facing; the sequence is QN. A helical membrane pass occupies residues 61–81; it reads VPVGIAYPMLSLNFVWVTLAA. Residues 82-87 are Cytoplasmic-facing; it reads VKLWHE. A helical membrane pass occupies residues 88–108; sequence PVSPRHWCGVAFIIGGIVILG. The Periplasmic segment spans residues 109 to 111; that stretch reads STV.

It belongs to the ArnE family. Heterodimer of ArnE and ArnF.

It localises to the cell inner membrane. Its pathway is bacterial outer membrane biogenesis; lipopolysaccharide biosynthesis. In terms of biological role, translocates 4-amino-4-deoxy-L-arabinose-phosphoundecaprenol (alpha-L-Ara4N-phosphoundecaprenol) from the cytoplasmic to the periplasmic side of the inner membrane. The chain is Probable 4-amino-4-deoxy-L-arabinose-phosphoundecaprenol flippase subunit ArnE from Escherichia coli (strain 55989 / EAEC).